The primary structure comprises 606 residues: Prostaglandin G/H synthase 1 (606 aa).

The N-terminal stretch at 1–30 (MSRSSPSLRLPVLLLLLLLLLLPPPPPVLP) is a signal peptide. The EGF-like domain maps to 38 to 76 (PVNPCCYFPCQHQGVCVRVALDRYQCDCTRTGYSGPNCT). 4 disulfides stabilise this stretch: Cys-42–Cys-53, Cys-43–Cys-165, Cys-47–Cys-63, and Cys-65–Cys-75. 3 N-linked (GlcNAc...) asparagine glycosylation sites follow: Asn-74, Asn-110, and Asn-150. His-213 (proton acceptor) is an active-site residue. Catalysis depends on Tyr-391, which acts as the For cyclooxygenase activity. Residue His-394 coordinates heme b. A glycan (N-linked (GlcNAc...) asparagine) is linked at Asn-416. The cysteines at positions 575 and 581 are disulfide-linked.

It belongs to the prostaglandin G/H synthase family. As to quaternary structure, homodimer. Heme b serves as cofactor.

It localises to the microsome membrane. It is found in the endoplasmic reticulum membrane. It catalyses the reaction (5Z,8Z,11Z,14Z)-eicosatetraenoate + AH2 + 2 O2 = prostaglandin H2 + A + H2O. The enzyme catalyses (5Z,8Z,11Z,14Z)-eicosatetraenoate + 2 O2 = prostaglandin G2. The catalysed reaction is prostaglandin G2 + AH2 = prostaglandin H2 + A + H2O. It carries out the reaction (9Z,12Z)-octadecadienoate + AH2 + O2 = (9R)-hydroxy-(10E,12Z)-octadecadienoate + A + H2O. It catalyses the reaction (9Z,12Z)-octadecadienoate + AH2 + O2 = (9S)-hydroxy-(10E,12Z)-octadecadienoate + A + H2O. The enzyme catalyses (9Z,12Z)-octadecadienoate + AH2 + O2 = (13S)-hydroxy-(9Z,11E)-octadecadienoate + A + H2O. The catalysed reaction is (9Z,12Z)-octadecadienoate + AH2 + O2 = (13R)-hydroxy-(9Z,11E)-octadecadienoate + A + H2O. Its pathway is lipid metabolism; prostaglandin biosynthesis. Its activity is regulated as follows. The cyclooxygenase activity is inhibited by nonsteroidal anti-inflammatory drugs (NSAIDs) including ibuprofen, flurbiprofen, ketoprofen, naproxen, flurbiprofen, anirolac, fenclofenac and diclofenac. Functionally, dual cyclooxygenase and peroxidase that plays an important role in the biosynthesis pathway of prostanoids, a class of C20 oxylipins mainly derived from arachidonate ((5Z,8Z,11Z,14Z)-eicosatetraenoate, AA, C20:4(n-6)), with a particular role in the inflammatory response. The cyclooxygenase activity oxygenates AA to the hydroperoxy endoperoxide prostaglandin G2 (PGG2), and the peroxidase activity reduces PGG2 to the hydroxy endoperoxide prostaglandin H2 (PGH2), the precursor of all 2-series prostaglandins and thromboxanes. This complex transformation is initiated by abstraction of hydrogen at carbon 13 (with S-stereochemistry), followed by insertion of molecular O2 to form the endoperoxide bridge between carbon 9 and 11 that defines prostaglandins. The insertion of a second molecule of O2 (bis-oxygenase activity) yields a hydroperoxy group in PGG2 that is then reduced to PGH2 by two electrons. Involved in the constitutive production of prostanoids in particular in the stomach and platelets. In gastric epithelial cells, it is a key step in the generation of prostaglandins, such as prostaglandin E2 (PGE2), which plays an important role in cytoprotection. In platelets, it is involved in the generation of thromboxane A2 (TXA2), which promotes platelet activation and aggregation, vasoconstriction and proliferation of vascular smooth muscle cells. Can also use linoleate (LA, (9Z,12Z)-octadecadienoate, C18:2(n-6)) as substrate and produce hydroxyoctadecadienoates (HODEs) in a regio- and stereospecific manner, being (9R)-HODE ((9R)-hydroxy-(10E,12Z)-octadecadienoate) and (13S)-HODE ((13S)-hydroxy-(9Z,11E)-octadecadienoate) its major products. This chain is Prostaglandin G/H synthase 1 (PTGS1), found in Oryctolagus cuniculus (Rabbit).